We begin with the raw amino-acid sequence, 502 residues long: Keratin-associated protein 16-1 (502 aa).

A run of 15 repeats spans residues 4-8, 58-62, 73-77, 93-97, 108-112, 113-117, 133-137, 152-156, 177-181, 187-191, 212-216, 222-226, 272-276, 292-296, and 347-351. The 15 X 5 AA repeats of C-C-X(3) stretch occupies residues 73 to 307; that stretch reads CCEATICEPS…CQPVCPEPSP (235 aa). The segment at 435–502 is disordered; that stretch reads RQPCTDSDND…QPAASKPADR (68 aa). Positions 489–502 are enriched in low complexity; sequence AAAPQPAASKPADR.

The protein belongs to the KRTAP type 16 family. Interacts with hair keratins.

Its function is as follows. In the hair cortex, hair keratin intermediate filaments are embedded in an interfilamentous matrix, consisting of hair keratin-associated proteins (KRTAP), which are essential for the formation of a rigid and resistant hair shaft through their extensive disulfide bond cross-linking with abundant cysteine residues of hair keratins. The matrix proteins include the high-sulfur and high-glycine-tyrosine keratins. The sequence is that of Keratin-associated protein 16-1 (Krtap16-1) from Mus musculus (Mouse).